A 105-amino-acid polypeptide reads, in one-letter code: N(4)-acetylcytidine amidohydrolase (105 aa).

Residues 7 to 93 (TFFERFEHDI…VIAEIYPGLE (87 aa)) form the ASCH domain. The active-site Proton acceptor is Lys-21. The active-site Nucleophile is the Thr-24. Glu-74 functions as the Proton donor in the catalytic mechanism.

The protein belongs to the N(4)-acetylcytidine amidohydrolase family.

It catalyses the reaction N(4)-acetylcytidine + H2O = cytidine + acetate + H(+). The catalysed reaction is N(4)-acetyl-2'-deoxycytidine + H2O = 2'-deoxycytidine + acetate + H(+). It carries out the reaction N(4)-acetylcytosine + H2O = cytosine + acetate + H(+). Its function is as follows. Catalyzes the hydrolysis of N(4)-acetylcytidine (ac4C). In Shewanella baltica (strain OS155 / ATCC BAA-1091), this protein is N(4)-acetylcytidine amidohydrolase.